A 112-amino-acid polypeptide reads, in one-letter code: UPF0342 protein SGO_1370 (112 aa).

Belongs to the UPF0342 family.

The protein is UPF0342 protein SGO_1370 of Streptococcus gordonii (strain Challis / ATCC 35105 / BCRC 15272 / CH1 / DL1 / V288).